The primary structure comprises 115 residues: NADH-ubiquinone oxidoreductase chain 3 (115 aa).

3 consecutive transmembrane segments (helical) span residues 3 to 23 (LILT…IAFW), 55 to 75 (FFLV…LLPL), and 86 to 106 (TMLT…AYEW).

This sequence belongs to the complex I subunit 3 family. In terms of assembly, core subunit of respiratory chain NADH dehydrogenase (Complex I) which is composed of 45 different subunits. Interacts with TMEM186. Interacts with TMEM242.

Its subcellular location is the mitochondrion inner membrane. The catalysed reaction is a ubiquinone + NADH + 5 H(+)(in) = a ubiquinol + NAD(+) + 4 H(+)(out). Functionally, core subunit of the mitochondrial membrane respiratory chain NADH dehydrogenase (Complex I) which catalyzes electron transfer from NADH through the respiratory chain, using ubiquinone as an electron acceptor. Essential for the catalytic activity of complex I. This is NADH-ubiquinone oxidoreductase chain 3 from Rhinoceros unicornis (Greater Indian rhinoceros).